The chain runs to 200 residues: Probable GTP-binding protein EngB (200 aa).

Residues 26 to 200 (SIPEVALAGR…IYEIAQCIKK (175 aa)) form the EngB-type G domain. Residues 34-41 (GRSNVGKS), 61-65 (GCTRQ), 80-83 (DLPG), 147-150 (TKID), and 179-181 (VSS) each bind GTP. Residues S41 and T63 each contribute to the Mg(2+) site.

It belongs to the TRAFAC class TrmE-Era-EngA-EngB-Septin-like GTPase superfamily. EngB GTPase family. Mg(2+) is required as a cofactor.

Functionally, necessary for normal cell division and for the maintenance of normal septation. This Ehrlichia ruminantium (strain Gardel) protein is Probable GTP-binding protein EngB.